A 391-amino-acid chain; its full sequence is Na(+)/H(+) antiporter NhaA (391 aa).

12 helical membrane-spanning segments follow: residues 9 to 29 (FQLE…ALII), 36 to 56 (YLYS…LNIA), 59 to 79 (LLLW…GLEV), 95 to 115 (ILPA…YWFI), 123 to 143 (VAGW…VLAL), 154 to 174 (LFLM…IALF), 177 to 197 (GTLS…LIAM), 213 to 235 (LILW…ALAL), 259 to 279 (WVAY…SLAG), 293 to 313 (IAVG…WLAV), 329 to 349 (ILGV…VGSL), and 364 to 384 (MGIL…TAMA).

It belongs to the NhaA Na(+)/H(+) (TC 2.A.33) antiporter family.

It localises to the cell inner membrane. It catalyses the reaction Na(+)(in) + 2 H(+)(out) = Na(+)(out) + 2 H(+)(in). Its function is as follows. Na(+)/H(+) antiporter that extrudes sodium in exchange for external protons. The polypeptide is Na(+)/H(+) antiporter NhaA (Pseudomonas putida (strain GB-1)).